The chain runs to 217 residues: Lectin ADEL (217 aa).

5 cysteine pairs are disulfide-bonded: cysteine 5–cysteine 187, cysteine 42–cysteine 68, cysteine 61–cysteine 77, cysteine 114–cysteine 135, and cysteine 142–cysteine 206. Asparagine 30 carries an N-linked (GlcNAc...) asparagine glycan. Asparagine 102 and asparagine 126 each carry an N-linked (GlcNAc...) asparagine glycan.

In terms of assembly, homodimer; disulfide-linked. Contains disulfide bonds.

Binds in decreasing order of affinity: galacturonic acid, D-galactosamine, methyl-alpha-D-galactopyranoside and further galactose-containing carbohydrates. Has hemagglutinating activity against human and rabbit erythrocytes. This chain is Lectin ADEL, found in Aplysia dactylomela (Spotted sea hare).